The following is a 127-amino-acid chain: 3-aminoacrylate deaminase RutC (127 aa).

The protein belongs to the RutC family.

It carries out the reaction (Z)-3-aminoacrylate + H2O + H(+) = 3-oxopropanoate + NH4(+). Its function is as follows. Involved in pyrimidine catabolism. Catalyzes the deamination of 3-aminoacrylate to malonic semialdehyde, a reaction that can also occur spontaneously. RutC may facilitate the reaction and modulate the metabolic fitness, rather than catalyzing essential functions. The chain is 3-aminoacrylate deaminase RutC from Pseudomonas savastanoi pv. phaseolicola (strain 1448A / Race 6) (Pseudomonas syringae pv. phaseolicola (strain 1448A / Race 6)).